The primary structure comprises 2159 residues: HEAT repeat-containing protein 1 (2159 aa).

HEAT repeat units follow at residues 346-384, 509-548, 909-947, 1024-1062, 1219-1260, 1594-1632, 1733-1773, and 2115-2153; these read SPLL…SVFQ, NSFD…LMDV, ASDS…LVSS, EPVL…LLSK, QYLV…VCQK, LLPM…QRTK, IPQL…ASET, and MVLL…ILGE.

Belongs to the HEATR1/UTP10 family. Part of the small subunit (SSU) processome, composed of more than 70 proteins and the RNA chaperone small nucleolar RNA (snoRNA) U3. Interacts with MYC; the interaction is required for localization of MYC to the nucleolus.

The protein localises to the nucleus. The protein resides in the nucleolus. Functionally, ribosome biogenesis factor; required for recruitment of Myc to nucleoli. Involved in nucleolar processing of pre-18S ribosomal RNA. Required for optimal pre-ribosomal RNA transcription by RNA polymerase I. Part of the small subunit (SSU) processome, first precursor of the small eukaryotic ribosomal subunit. During the assembly of the SSU processome in the nucleolus, many ribosome biogenesis factors, an RNA chaperone and ribosomal proteins associate with the nascent pre-rRNA and work in concert to generate RNA folding, modifications, rearrangements and cleavage as well as targeted degradation of pre-ribosomal RNA by the RNA exosome. Involved in neuronal-lineage cell proliferation. Required for cell survival in the CNS through its role in rRNA synthesis and processing. The sequence is that of HEAT repeat-containing protein 1 (heatr1) from Danio rerio (Zebrafish).